A 602-amino-acid polypeptide reads, in one-letter code: RNA-binding NOB1-like protein (602 aa).

The segment at 1–25 (MDPKPTSMWSSIVKKDPPSKPPVND) is disordered. The region spanning 48 to 134 (VVDANAIIEG…LKLIALSYTL (87 aa)) is the PINc domain. Disordered stretches follow at residues 258-278 (SQGQ…VSRS) and 301-331 (IQKD…GEDI). A compositionally biased stretch (basic and acidic residues) spans 301–329 (IQKDQEADKARHTKEANETHAKDSGKNGE). A coiled-coil region spans residues 331–365 (ISSILKDMRLEEESLRALQEETEETNAEATLINGE). Residues 452–522 (IRQLHRWILK…QYSIPMPKGG (71 aa)) form an NOB1 zinc finger. Zn(2+) contacts are provided by cysteine 462, cysteine 465, cysteine 477, and cysteine 480.

Belongs to the NOB1 family. In terms of assembly, component of the small ribosomal subunit, ribosomal RNA processing complex (SSU RRP complex). As to expression, highly expressed in flowers and siliques and at lower levels in roots, hypocotyls, stems, leaves and seeds.

It localises to the nucleus. It is found in the nucleoplasm. The protein resides in the cytoplasm. Its function is as follows. Essential protein required during embryogenesis and pollen development. Endonuclease cleaving pre-rRNA at the 3' end of the mature 18S rRNA (D-site); cleaves 20S pre-rRNA in the cytoplasm. Required for processing of 20S pre-rRNA precursor and biogenesis of 40S ribosomal subunits. The sequence is that of RNA-binding NOB1-like protein from Arabidopsis thaliana (Mouse-ear cress).